The primary structure comprises 856 residues: Serine/threonine-protein kinase unc-51 (856 aa).

The 267-residue stretch at 9-275 folds into the Protein kinase domain; that stretch reads YSKRDLLGHG…FEDFFNHPFL (267 aa). ATP-binding positions include 15-23 and K39; that span reads LGHGAFAIV. D134 serves as the catalytic Proton acceptor. A disordered region spans residues 304-327; sequence PQSSLPVPKRAGSTKLDSPTPVRR. An LIR motif is present at residues 358 to 361; it reads FTFL. Disordered stretches follow at residues 362-391, 405-471, and 520-582; these read PPRQ…PVPV, LAAA…ERMT, and PTTT…PTEP. Polar residues predominate over residues 365–385; it reads QESSPVKQVQVHTNVSPSLTT. Residues 411–436 are compositionally biased toward low complexity; sequence TAVPSSSSPTGSAVSAQHQHQHQQQQ. Polar residues-rich tracts occupy residues 527–536 and 566–578; these read IPKSATTANI and KYQQ…SPTA. Positions 750-856 are required for interaction with unc-14 and vab-8; the sequence is YHQCLVRSQE…RQGFVAAVNT (107 aa).

This sequence belongs to the protein kinase superfamily. Ser/Thr protein kinase family. APG1/unc-51/ULK1 subfamily. As to quaternary structure, interacts with unc-14 and vab-8. Interacts (via C-terminus) with atg-13. Interacts (via the LIR motif) with lgg-1; the interaction is direct. The cofactor is Mg(2+).

It catalyses the reaction L-seryl-[protein] + ATP = O-phospho-L-seryl-[protein] + ADP + H(+). The enzyme catalyses L-threonyl-[protein] + ATP = O-phospho-L-threonyl-[protein] + ADP + H(+). Its function is as follows. Protein kinase important for axonal elongation and axonal guidance. Functions in the CAN axons to direct both anterior and posterior migrations. Phosphorylates both unc-14 and vab-8. Component of the unc-51/atg-13 complex that is probably recruited by lgg-1 to preautophagosomes and is required for autophagosome formation. Interaction with autophagy related proteins such as atg-13 links it to the autophagy machinery to in turn promote P-granule degradation in somatic cells. Plays a role in mitophagy during limited food availability. Regulates cell size. Plays a role in male tail ray pattern formation. May be required for normal dauer morphogenesis. This chain is Serine/threonine-protein kinase unc-51, found in Caenorhabditis elegans.